A 1088-amino-acid chain; its full sequence is RNA-directed RNA polymerase (1088 aa).

A RdRp catalytic domain is found at Leu501–Ile687.

This sequence belongs to the reoviridae RNA-directed RNA polymerase family. Interacts with VP3 (Potential). Interacts with VP2; this interaction activates VP1. Interacts with NSP5; this interaction is probably necessary for the formation of functional virus factories. Interacts with NSP2; this interaction is weak. It depends on Mg(2+) as a cofactor.

Its subcellular location is the virion. The enzyme catalyses RNA(n) + a ribonucleoside 5'-triphosphate = RNA(n+1) + diphosphate. Its function is as follows. RNA-directed RNA polymerase that is involved in both transcription and genome replication. Together with VP3 capping enzyme, forms an enzyme complex positioned near the channels situated at each of the five-fold vertices of the core. Following infection, the outermost layer of the virus is lost, leaving a double-layered particle (DLP) made up of the core and VP6 shell. VP1 then catalyzes the transcription of fully conservative plus-strand genomic RNAs that are extruded through the DLP's channels into the cytoplasm where they function as mRNAs for translation of viral proteins. One copy of each of the viral (+)RNAs is also recruited during core assembly, together with newly synthesized polymerase complexes and VP2. The polymerase of these novo-formed particles catalyzes the synthesis of complementary minus-strands leading to dsRNA formation. To do so, the polymerase specifically recognizes and binds 4 bases 5'-UGUG-3' in the conserved 3'-sequence of plus-strand RNA templates. VP2 presumably activates the autoinhibited VP1-RNA complex to coordinate packaging and genome replication. Once dsRNA synthesis is complete, the polymerase switches to the transcriptional mode, thus providing secondary transcription. The chain is RNA-directed RNA polymerase from Rotavirus A (strain RVA/Human/Japan/KU/1995/G1P1A[8]) (RV-A).